The chain runs to 96 residues: Co-chaperonin GroES (96 aa).

The protein belongs to the GroES chaperonin family. In terms of assembly, heptamer of 7 subunits arranged in a ring. Interacts with the chaperonin GroEL.

The protein resides in the cytoplasm. Together with the chaperonin GroEL, plays an essential role in assisting protein folding. The GroEL-GroES system forms a nano-cage that allows encapsulation of the non-native substrate proteins and provides a physical environment optimized to promote and accelerate protein folding. GroES binds to the apical surface of the GroEL ring, thereby capping the opening of the GroEL channel. The polypeptide is Co-chaperonin GroES (Methylobacillus flagellatus (strain ATCC 51484 / DSM 6875 / VKM B-1610 / KT)).